A 490-amino-acid chain; its full sequence is Aspartyl/glutamyl-tRNA(Asn/Gln) amidotransferase subunit B (490 aa).

This sequence belongs to the GatB/GatE family. GatB subfamily. As to quaternary structure, heterotrimer of A, B and C subunits.

The enzyme catalyses L-glutamyl-tRNA(Gln) + L-glutamine + ATP + H2O = L-glutaminyl-tRNA(Gln) + L-glutamate + ADP + phosphate + H(+). It carries out the reaction L-aspartyl-tRNA(Asn) + L-glutamine + ATP + H2O = L-asparaginyl-tRNA(Asn) + L-glutamate + ADP + phosphate + 2 H(+). Allows the formation of correctly charged Asn-tRNA(Asn) or Gln-tRNA(Gln) through the transamidation of misacylated Asp-tRNA(Asn) or Glu-tRNA(Gln) in organisms which lack either or both of asparaginyl-tRNA or glutaminyl-tRNA synthetases. The reaction takes place in the presence of glutamine and ATP through an activated phospho-Asp-tRNA(Asn) or phospho-Glu-tRNA(Gln). This is Aspartyl/glutamyl-tRNA(Asn/Gln) amidotransferase subunit B from Symbiobacterium thermophilum (strain DSM 24528 / JCM 14929 / IAM 14863 / T).